A 186-amino-acid chain; its full sequence is Nuclear transcription factor Y subunit C-5 (186 aa).

Residues glutamine 166 to asparagine 186 are disordered.

This sequence belongs to the NFYC/HAP5 subunit family. As to quaternary structure, heterotrimeric transcription factor composed of three components, NF-YA, NF-YB and NF-YC. NF-YB and NF-YC must interact and dimerize for NF-YA association and DNA binding. As to expression, expressed in inflorescences and flowers.

Its subcellular location is the nucleus. In terms of biological role, stimulates the transcription of various genes by recognizing and binding to a CCAAT motif in promoters. This is Nuclear transcription factor Y subunit C-5 (NFYC5) from Arabidopsis thaliana (Mouse-ear cress).